The following is a 454-amino-acid chain: Ribosomal protein uS12 methylthiotransferase RimO (454 aa).

The MTTase N-terminal domain occupies 14–125 (SKVAFSHVGC…IAKVLDRVEK (112 aa)). [4Fe-4S] cluster contacts are provided by Cys-23, Cys-59, Cys-88, Cys-163, Cys-167, and Cys-170. The Radical SAM core domain occupies 149-378 (DKNKFVAYLR…ISVQQNISKD (230 aa)). A TRAM domain is found at 381–452 (QSYVGSKMKI…EYDLYGETLK (72 aa)).

The protein belongs to the methylthiotransferase family. RimO subfamily. [4Fe-4S] cluster serves as cofactor.

It localises to the cytoplasm. The catalysed reaction is L-aspartate(89)-[ribosomal protein uS12]-hydrogen + (sulfur carrier)-SH + AH2 + 2 S-adenosyl-L-methionine = 3-methylsulfanyl-L-aspartate(89)-[ribosomal protein uS12]-hydrogen + (sulfur carrier)-H + 5'-deoxyadenosine + L-methionine + A + S-adenosyl-L-homocysteine + 2 H(+). Functionally, catalyzes the methylthiolation of an aspartic acid residue of ribosomal protein uS12. The protein is Ribosomal protein uS12 methylthiotransferase RimO of Prochlorococcus marinus (strain MIT 9215).